We begin with the raw amino-acid sequence, 115 residues long: Large ribosomal subunit protein bL20c (115 aa).

Belongs to the bacterial ribosomal protein bL20 family.

The protein localises to the plastid. It localises to the chloroplast. Its function is as follows. Binds directly to 23S ribosomal RNA and is necessary for the in vitro assembly process of the 50S ribosomal subunit. It is not involved in the protein synthesizing functions of that subunit. This is Large ribosomal subunit protein bL20c (rpl20) from Mesostigma viride (Green alga).